A 444-amino-acid chain; its full sequence is MEKYMSLLTRIEEMMQSTSYQEGDRLPSIRQLSARYQVSKSTVIRALQELEKRHLIYSVPKSGYYIVKKSGKSKSGQPGPIDFATSAPDPDVFPYLDFQHCINKAIDTYKNDLFIYGTPKGLPSLIRVLRKLLATQQVFADERHIFITSGVQQALSLLCAMPFPNGKEKIAIEQPGYHLMVEQLETLGIPAIGVKRTEEGLDIAKVERLFQTESIKFFYTMPRFHNPLGCSLSERDKQELVRLAEAYDVYLVEDDYLGDLEENKKADPLYAYDLSSHVIYLKSFSKMMFPGLRVGAAVLPEALTDTFYAYKKLNDIDCSMISQAALEIYLKSGMYGRHKEKIRDSYKERSLRLHQAIRTHRQLGSGRFTFSSGQAPCMHTHLVLPQDLPASRVIHRLEKQGVLLEAIDRHYLSDYPKENLLKINISNVKTEDIERGVKLLMSHL.

One can recognise an HTH gntR-type domain in the interval 1–69 (MEKYMSLLTR…PKSGYYIVKK (69 aa)). The segment at residues 29 to 48 (IRQLSARYQVSKSTVIRALQ) is a DNA-binding region (H-T-H motif). The residue at position 286 (Lys-286) is an N6-(pyridoxal phosphate)lysine.

The protein in the C-terminal section; belongs to the class-I pyridoxal-phosphate-dependent aminotransferase family. It depends on pyridoxal 5'-phosphate as a cofactor.

This is an uncharacterized protein from Bacillus subtilis (strain 168).